We begin with the raw amino-acid sequence, 687 residues long: Bifunctional lysine-specific demethylase and histidyl-hydroxylase NO66 (687 aa).

A disordered region spans residues 1-174 (MSDKNKKVSA…RSCPLPSKKN (174 aa)). Basic and acidic residues predominate over residues 23-32 (DVQKGTKNSD). 2 stretches are compositionally biased toward low complexity: residues 33-50 (KNGA…SKNG) and 58-74 (KKNG…SSSS). Residues 75-96 (GEDEEDDSTDSSDEYESSESGE) are compositionally biased toward acidic residues. Composition is skewed to polar residues over residues 100 to 116 (LNSH…ANTR) and 136 to 156 (RTSS…QQPK). In terms of domain architecture, JmjC spans 347-483 (NPSSYLVQLR…NLMEKLMPLV (137 aa)). H387, D389, and H449 together coordinate Fe cation.

The protein belongs to the ROX family. NO66 subfamily. Fe(2+) serves as cofactor.

It is found in the nucleus. The catalysed reaction is N(6),N(6)-dimethyl-L-lysyl(36)-[histone H3] + 2 2-oxoglutarate + 2 O2 = L-lysyl(36)-[histone H3] + 2 formaldehyde + 2 succinate + 2 CO2. Oxygenase that can act as both a histone lysine demethylase and a ribosomal histidine hydroxylase. Specifically demethylates 'Lys-4' (H3K4me) and 'Lys-36' (H3K36me) of histone H3, thereby playing a central role in histone code. In Drosophila persimilis (Fruit fly), this protein is Bifunctional lysine-specific demethylase and histidyl-hydroxylase NO66.